The sequence spans 210 residues: Ribosomal RNA large subunit methyltransferase E (210 aa).

Residues G64, W66, D84, D100, and D125 each coordinate S-adenosyl-L-methionine. Catalysis depends on K165, which acts as the Proton acceptor.

This sequence belongs to the class I-like SAM-binding methyltransferase superfamily. RNA methyltransferase RlmE family.

The protein resides in the cytoplasm. The enzyme catalyses uridine(2552) in 23S rRNA + S-adenosyl-L-methionine = 2'-O-methyluridine(2552) in 23S rRNA + S-adenosyl-L-homocysteine + H(+). In terms of biological role, specifically methylates the uridine in position 2552 of 23S rRNA at the 2'-O position of the ribose in the fully assembled 50S ribosomal subunit. In Chromohalobacter salexigens (strain ATCC BAA-138 / DSM 3043 / CIP 106854 / NCIMB 13768 / 1H11), this protein is Ribosomal RNA large subunit methyltransferase E.